Here is a 355-residue protein sequence, read N- to C-terminus: 45 kDa calcium-binding protein (355 aa).

The first 29 residues, 1 to 29, serve as a signal peptide directing secretion; that stretch reads MASRQAPLCGLAPCCLWLLGVVLLMNASA. An N-linked (GlcNAc...) asparagine glycan is attached at Asn33. 2 EF-hand domains span residues 91–126 and 130–165; these read KSRR…KTAE and EAVA…TKGH. Ser92 is modified (phosphoserine). Ca(2+) is bound by residues Asp104, Asn106, Asp108, Arg110, Glu115, Asp143, Asp145, Asp147, His149, and Glu154. Residues Thr186 and Thr210 each carry the phosphothreonine modification. 3 EF-hand domains span residues 226 to 261, 271 to 306, and 307 to 342; these read MLQF…TVEN, WVRD…MNEF, and SALN…FTGS. Residues Asp239, Asp241, Asp243, Lys245, and Glu250 each contribute to the Ca(2+) site. Residue Thr258 is modified to Phosphothreonine. Positions 284, 286, and 288 each coordinate Ca(2+). Position 292 is a phosphothreonine (Thr292). Ca(2+) is bound by residues Glu295, Asp320, Asn322, Asn324, Tyr326, and Glu331. The tract at residues 302–355 is necessary for intracellular retention in Golgi apparatus lumen; the sequence is PMNEFSALNEAKQMIAIADENQNHYLEPEEVLKYSEFFTGSKLVDYARSVHEEF.

Belongs to the CREC family.

It localises to the golgi apparatus lumen. May regulate calcium-dependent activities in the endoplasmic reticulum lumen or post-ER compartment. The chain is 45 kDa calcium-binding protein (SDF4) from Bos taurus (Bovine).